Reading from the N-terminus, the 190-residue chain is Peptidyl-tRNA hydrolase (190 aa).

Phenylalanine 14 lines the tRNA pocket. Histidine 19 (proton acceptor) is an active-site residue. 3 residues coordinate tRNA: methionine 64, asparagine 66, and asparagine 112.

The protein belongs to the PTH family. As to quaternary structure, monomer.

The protein localises to the cytoplasm. It carries out the reaction an N-acyl-L-alpha-aminoacyl-tRNA + H2O = an N-acyl-L-amino acid + a tRNA + H(+). In terms of biological role, hydrolyzes ribosome-free peptidyl-tRNAs (with 1 or more amino acids incorporated), which drop off the ribosome during protein synthesis, or as a result of ribosome stalling. Functionally, catalyzes the release of premature peptidyl moieties from peptidyl-tRNA molecules trapped in stalled 50S ribosomal subunits, and thus maintains levels of free tRNAs and 50S ribosomes. This chain is Peptidyl-tRNA hydrolase, found in Staphylococcus saprophyticus subsp. saprophyticus (strain ATCC 15305 / DSM 20229 / NCIMB 8711 / NCTC 7292 / S-41).